The primary structure comprises 430 residues: Glutamate-1-semialdehyde 2,1-aminomutase (430 aa).

N6-(pyridoxal phosphate)lysine is present on lysine 267.

The protein belongs to the class-III pyridoxal-phosphate-dependent aminotransferase family. HemL subfamily. Homodimer. The cofactor is pyridoxal 5'-phosphate.

The protein localises to the cytoplasm. The enzyme catalyses (S)-4-amino-5-oxopentanoate = 5-aminolevulinate. It participates in porphyrin-containing compound metabolism; protoporphyrin-IX biosynthesis; 5-aminolevulinate from L-glutamyl-tRNA(Glu): step 2/2. The protein is Glutamate-1-semialdehyde 2,1-aminomutase of Cytophaga hutchinsonii (strain ATCC 33406 / DSM 1761 / CIP 103989 / NBRC 15051 / NCIMB 9469 / D465).